A 96-amino-acid polypeptide reads, in one-letter code: Protein RnfH (96 aa).

It belongs to the UPF0125 (RnfH) family.

The sequence is that of Protein RnfH from Citrobacter koseri (strain ATCC BAA-895 / CDC 4225-83 / SGSC4696).